Here is a 76-residue protein sequence, read N- to C-terminus: Conotoxin ArMLCL-022 (76 aa).

The first 19 residues, 1–19 (MLCLPVFIILLLLASTAAS), serve as a signal peptide directing secretion. Residues 20–52 (NPLETRIQSDLIRAALEDADMKTERGFLGVLMK) constitute a propeptide that is removed on maturation.

The protein belongs to the conotoxin T superfamily. In terms of tissue distribution, expressed by the venom duct.

It is found in the secreted. This is Conotoxin ArMLCL-022 from Conus arenatus (Sand-dusted cone).